The following is a 278-amino-acid chain: Elongation factor Ts (278 aa).

Residues 80 to 83 (TDFV) form an involved in Mg(2+) ion dislocation from EF-Tu region.

The protein belongs to the EF-Ts family.

Its subcellular location is the cytoplasm. In terms of biological role, associates with the EF-Tu.GDP complex and induces the exchange of GDP to GTP. It remains bound to the aminoacyl-tRNA.EF-Tu.GTP complex up to the GTP hydrolysis stage on the ribosome. This is Elongation factor Ts from Paenarthrobacter aurescens (strain TC1).